The primary structure comprises 101 residues: Small ribosomal subunit protein uS14 (101 aa).

It belongs to the universal ribosomal protein uS14 family. As to quaternary structure, part of the 30S ribosomal subunit. Contacts proteins S3 and S10.

Binds 16S rRNA, required for the assembly of 30S particles and may also be responsible for determining the conformation of the 16S rRNA at the A site. The polypeptide is Small ribosomal subunit protein uS14 (Polynucleobacter necessarius subsp. necessarius (strain STIR1)).